The primary structure comprises 467 residues: Asparagine--tRNA ligase (467 aa).

Belongs to the class-II aminoacyl-tRNA synthetase family. In terms of assembly, homodimer.

Its subcellular location is the cytoplasm. It catalyses the reaction tRNA(Asn) + L-asparagine + ATP = L-asparaginyl-tRNA(Asn) + AMP + diphosphate + H(+). This is Asparagine--tRNA ligase from Haemophilus ducreyi (strain 35000HP / ATCC 700724).